Reading from the N-terminus, the 200-residue chain is NADH-quinone oxidoreductase subunit C (200 aa).

It belongs to the complex I 30 kDa subunit family. In terms of assembly, NDH-1 is composed of 14 different subunits. Subunits NuoB, C, D, E, F, and G constitute the peripheral sector of the complex.

It localises to the cell inner membrane. The enzyme catalyses a quinone + NADH + 5 H(+)(in) = a quinol + NAD(+) + 4 H(+)(out). NDH-1 shuttles electrons from NADH, via FMN and iron-sulfur (Fe-S) centers, to quinones in the respiratory chain. The immediate electron acceptor for the enzyme in this species is believed to be ubiquinone. Couples the redox reaction to proton translocation (for every two electrons transferred, four hydrogen ions are translocated across the cytoplasmic membrane), and thus conserves the redox energy in a proton gradient. This chain is NADH-quinone oxidoreductase subunit C, found in Ralstonia nicotianae (strain ATCC BAA-1114 / GMI1000) (Ralstonia solanacearum).